Reading from the N-terminus, the 221-residue chain is Peroxiredoxin 2 (221 aa).

Residues 15–170 (PQIGAPAPDF…IIRIIDALQT (156 aa)) form the Thioredoxin domain. Catalysis depends on Cys-56, which acts as the Cysteine sulfenic acid (-SOH) intermediate. Arg-133 is a binding site for substrate. A disulfide bridge connects residues Cys-211 and Cys-217.

It belongs to the peroxiredoxin family. Prx6 subfamily. Homodecamer. Pentamer of dimers that assemble into a ring structure.

The protein localises to the cytoplasm. The enzyme catalyses a hydroperoxide + [thioredoxin]-dithiol = an alcohol + [thioredoxin]-disulfide + H2O. Its function is as follows. Thiol-specific peroxidase that catalyzes the reduction of hydrogen peroxide and organic hydroperoxides to water and alcohols, respectively. Plays a role in cell protection against oxidative stress by detoxifying peroxides. This Caldanaerobacter subterraneus subsp. tengcongensis (strain DSM 15242 / JCM 11007 / NBRC 100824 / MB4) (Thermoanaerobacter tengcongensis) protein is Peroxiredoxin 2.